The chain runs to 287 residues: uncharacterized protein (287 aa).

Residues 1 to 23 (MTVSDSPAQRQTPPQTPGGTAPR) form a disordered region. Residues 7–23 (PAQRQTPPQTPGGTAPR) are compositionally biased toward low complexity. Positions 31, 33, and 204 each coordinate Mg(2+).

It belongs to the HAD-like hydrolase superfamily. SerB family.

This is an uncharacterized protein from Mycobacterium tuberculosis (strain CDC 1551 / Oshkosh).